Here is a 643-residue protein sequence, read N- to C-terminus: Probable extracellular metalloproteinase 4 (643 aa).

An N-terminal signal peptide occupies residues Met-1 to Ala-18. The propeptide occupies His-19–Ala-254. Residues Ser-49–Asn-69 form a disordered region. The span at Glu-58–Asn-69 shows a compositional bias: polar residues. N-linked (GlcNAc...) asparagine glycosylation is found at Asn-271 and Asn-420. His-437 serves as a coordination point for Zn(2+). The active site involves Glu-438. His-441 is a binding site for Zn(2+). N-linked (GlcNAc...) asparagine glycans are attached at residues Asn-603 and Asn-629.

It belongs to the peptidase M36 family. It depends on Zn(2+) as a cofactor.

The protein localises to the secreted. In terms of biological role, secreted metalloproteinase probably acting as a virulence factor. In Trichophyton verrucosum (strain HKI 0517), this protein is Probable extracellular metalloproteinase 4 (MEP4).